We begin with the raw amino-acid sequence, 118 residues long: Large ribosomal subunit protein bL19 (118 aa).

Belongs to the bacterial ribosomal protein bL19 family.

Its function is as follows. This protein is located at the 30S-50S ribosomal subunit interface and may play a role in the structure and function of the aminoacyl-tRNA binding site. The protein is Large ribosomal subunit protein bL19 of Campylobacter curvus (strain 525.92).